A 122-amino-acid polypeptide reads, in one-letter code: Large ribosomal subunit protein uL24 (122 aa).

Belongs to the universal ribosomal protein uL24 family. Part of the 50S ribosomal subunit.

One of two assembly initiator proteins, it binds directly to the 5'-end of the 23S rRNA, where it nucleates assembly of the 50S subunit. In terms of biological role, located at the polypeptide exit tunnel on the outside of the subunit. This chain is Large ribosomal subunit protein uL24, found in Pyrobaculum arsenaticum (strain DSM 13514 / JCM 11321 / PZ6).